Consider the following 1004-residue polypeptide: Receptor-type tyrosine-protein phosphatase N2 (1004 aa).

An N-terminal signal peptide occupies residues 1–27 (MGLPLPLLLLLLLPPPLPRALPAPASA). The tract at residues 1–409 (MGLPLPLLLL…PEAPLLEKSS (409 aa)) is involved in localization to secretory granules; interaction with CPE. Over 28–603 (RGRQLPGRLG…HPEEQEDSTK (576 aa)) the chain is Extracellular. An Omega-N-methylarginine modification is found at Arg259. Disordered stretches follow at residues 274–294 (APAL…SLSM), 333–360 (QSDP…DAPE), and 393–459 (DHGS…WRLE). Ser340 bears the Phosphoserine mark. Basic and acidic residues-rich tracts occupy residues 341-356 (QESH…REQA) and 407-418 (KSSRAEMKKSEQ). Residues 419–430 (PEEVLSSEEETA) are compositionally biased toward acidic residues. Phosphoserine is present on residues Ser424 and Ser425. A compositionally biased stretch (basic and acidic residues) spans 431–450 (GVEHVKSRTYSKDLLERKPN). Asn553 carries an N-linked (GlcNAc...) asparagine glycan. A helical membrane pass occupies residues 604–624 (FIVLTFLSIACILAVLLASSL). The Cytoplasmic portion of the chain corresponds to 625-1004 (AYCLRHNSHY…VNAILKALPQ (380 aa)). Residues 655–664 (YQELCRQRMA) carry the Tyrosine-based internalization motif motif. Residues 665-710 (VRPQDHSEGPHTSRINSVSSQLSDGPMPSPSARSSTSSWSEEPAQS) are disordered. Polar residues predominate over residues 677–687 (SRINSVSSQLS). A Phosphoserine; by PKA modification is found at Ser681. Ser687 is modified (phosphoserine). A compositionally biased stretch (low complexity) spans 694-710 (PSARSSTSSWSEEPAQS). Thr700 bears the Phosphothreonine; by PKA mark. Positions 734–994 (LEKEWEALCA…EFALTAVAEE (261 aa)) constitute a Tyrosine-protein phosphatase domain. Substrate-binding positions include Asp902 and 934–940 (CSDGAGR). The Phosphocysteine intermediate role is filled by Cys934. Lys959 carries the N6-acetyllysine modification. Gln979 contributes to the substrate binding site. Positions 993-999 (EEVNAIL) match the Leucine-based sorting signal motif.

It belongs to the protein-tyrosine phosphatase family. Receptor class 8 subfamily. As to quaternary structure, self-associates. Interacts (via cytoplasmic domain) with PTPRN (via cytoplasmic domain). Interacts (precursor form) with CPE. Interacts with HAP1. Interacts with AP2A1 or AP2A2 and AP1G1; indicative for an association with adaptor protein complex 2 (AP-2) and adaptor protein complex 1 (AP-1). Interacts with AP2M1; indicative for an association with adaptor protein complex 2 (AP-2). Interacts with MYO5A. In terms of processing, subject to proteolytic cleavage at multiple sites.

It is found in the cytoplasmic vesicle. The protein localises to the secretory vesicle membrane. It localises to the secretory vesicle. Its subcellular location is the synaptic vesicle membrane. The enzyme catalyses O-phospho-L-tyrosyl-[protein] + H2O = L-tyrosyl-[protein] + phosphate. Functionally, plays a role in vesicle-mediated secretory processes. Required for normal accumulation of secretory vesicles in hippocampus, pituitary and pancreatic islets. Required for the accumulation of normal levels of insulin-containing vesicles and preventing their degradation. Plays a role in insulin secretion in response to glucose stimuli. Required for normal accumulation of the neurotransmitters norepinephrine, dopamine and serotonin in the brain. In females, but not in males, required for normal accumulation and secretion of pituitary hormones, such as luteinizing hormone (LH) and follicle-stimulating hormone (FSH). Required to maintain normal levels of renin expression and renin release. May regulate catalytic active protein-tyrosine phosphatases such as PTPRA through dimerization. Has phosphatidylinositol phosphatase activity; the PIPase activity is involved in its ability to regulate insulin secretion. Can dephosphorylate phosphatidylinositol 4,5-biphosphate, phosphatidylinositol 5-phosphate and phosphatidylinositol 3-phosphate. Regulates PI(4,5)P2 level in the plasma membrane and localization of cofilin at the plasma membrane and thus is indirectly involved in regulation of actin dynamics related to cell migration and metastasis; upon hydrolysis of PI(4,5)P2 cofilin is released from the plasma membrane and acts in the cytoplasm in severing F-actin filaments. The polypeptide is Receptor-type tyrosine-protein phosphatase N2 (Ptprn2) (Rattus norvegicus (Rat)).